We begin with the raw amino-acid sequence, 506 residues long: Maturase K (506 aa).

Belongs to the intron maturase 2 family. MatK subfamily.

The protein localises to the plastid. The protein resides in the chloroplast. Usually encoded in the trnK tRNA gene intron. Probably assists in splicing its own and other chloroplast group II introns. This chain is Maturase K, found in Wisteria frutescens (American wisteria).